A 472-amino-acid polypeptide reads, in one-letter code: Glutamate--tRNA ligase 1 (472 aa).

The 'HIGH' region signature appears at 9–19 (PSPTGLLHVGN). Residues 112 to 131 (AMAEKRPPRYDGTWRDRDPS) show a composition bias toward basic and acidic residues. The disordered stretch occupies residues 112-133 (AMAEKRPPRYDGTWRDRDPSEA). A 'KMSKS' region motif is present at residues 238-242 (KLSKR). Position 241 (Lys241) interacts with ATP.

The protein belongs to the class-I aminoacyl-tRNA synthetase family. Glutamate--tRNA ligase type 1 subfamily. In terms of assembly, monomer.

The protein localises to the cytoplasm. It carries out the reaction tRNA(Glu) + L-glutamate + ATP = L-glutamyl-tRNA(Glu) + AMP + diphosphate. In terms of biological role, catalyzes the attachment of glutamate to tRNA(Glu) in a two-step reaction: glutamate is first activated by ATP to form Glu-AMP and then transferred to the acceptor end of tRNA(Glu). The protein is Glutamate--tRNA ligase 1 of Gluconobacter oxydans (strain 621H) (Gluconobacter suboxydans).